Consider the following 168-residue polypeptide: Putative ankyrin repeat protein RBE_1411 (168 aa).

3 ANK repeats span residues 59–88, 98–127, and 131–160; these read TIFS…LQHK, YGDT…DLTI, and KGET…ILGN.

In Rickettsia bellii (strain RML369-C), this protein is Putative ankyrin repeat protein RBE_1411.